The sequence spans 402 residues: Enoyl-[acyl-carrier-protein] reductase [NADH] (402 aa).

NAD(+) is bound by residues 48 to 53 (GASSGY), 74 to 75 (FE), 111 to 112 (DA), and 140 to 141 (LA). Residue Y226 participates in substrate binding. The active-site Proton donor is Y236. NAD(+) contacts are provided by residues K245 and 274-276 (VVT).

Belongs to the TER reductase family. Monomer.

The catalysed reaction is a 2,3-saturated acyl-[ACP] + NAD(+) = a (2E)-enoyl-[ACP] + NADH + H(+). It catalyses the reaction a 2,3-saturated acyl-CoA + NAD(+) = a (2E)-enoyl-CoA + NADH + H(+). The protein operates within lipid metabolism; fatty acid biosynthesis. Its function is as follows. Involved in the final reduction of the elongation cycle of fatty acid synthesis (FAS II). Catalyzes the reduction of a carbon-carbon double bond in an enoyl moiety that is covalently linked to an acyl carrier protein (ACP). It can also use crotonyl-CoA. This chain is Enoyl-[acyl-carrier-protein] reductase [NADH], found in Xanthomonas oryzae pv. oryzae (strain MAFF 311018).